The sequence spans 185 residues: Large ribosomal subunit protein uL5 (185 aa).

The protein belongs to the universal ribosomal protein uL5 family. In terms of assembly, part of the 50S ribosomal subunit; part of the 5S rRNA/L5/L18/L25 subcomplex. Contacts the 5S rRNA and the P site tRNA. Forms a bridge to the 30S subunit in the 70S ribosome.

This is one of the proteins that bind and probably mediate the attachment of the 5S RNA into the large ribosomal subunit, where it forms part of the central protuberance. In the 70S ribosome it contacts protein S13 of the 30S subunit (bridge B1b), connecting the 2 subunits; this bridge is implicated in subunit movement. Contacts the P site tRNA; the 5S rRNA and some of its associated proteins might help stabilize positioning of ribosome-bound tRNAs. The sequence is that of Large ribosomal subunit protein uL5 from Bartonella quintana (strain Toulouse) (Rochalimaea quintana).